A 185-amino-acid chain; its full sequence is Ribosome-recycling factor (185 aa).

The protein belongs to the RRF family.

The protein localises to the cytoplasm. Functionally, responsible for the release of ribosomes from messenger RNA at the termination of protein biosynthesis. May increase the efficiency of translation by recycling ribosomes from one round of translation to another. This is Ribosome-recycling factor from Glaesserella parasuis serovar 5 (strain SH0165) (Haemophilus parasuis).